The primary structure comprises 82 residues: Small ribosomal subunit protein bS16 (82 aa).

The protein belongs to the bacterial ribosomal protein bS16 family.

This chain is Small ribosomal subunit protein bS16, found in Klebsiella pneumoniae subsp. pneumoniae (strain ATCC 700721 / MGH 78578).